A 470-amino-acid polypeptide reads, in one-letter code: Neuraminidase (470 aa).

At 1–14 the chain is on the intravirion side; sequence MNPNQKIITIGSIS. Residues 11-32 are involved in apical transport and lipid raft association; that stretch reads GSISLGLVVFNVLLHVVSIIVT. Residues 15-35 form a helical membrane-spanning segment; that stretch reads LGLVVFNVLLHVVSIIVTVLV. Residues 32 to 86 form a hypervariable stalk region region; that stretch reads TVLVLGKGGNNGICNETVVREYNETVRIEKVTQWHNTNVVEYVPYWNGGTYMNNT. Residues 36-470 are Virion surface-facing; the sequence is LGKGGNNGIC…AILPFDIDKM (435 aa). Residues asparagine 46, asparagine 54, and asparagine 84 are each glycosylated (N-linked (GlcNAc...) asparagine; by host). Residues 89–470 form a head of neuraminidase region; sequence ICDAKGFAPF…AILPFDIDKM (382 aa). 8 disulfides stabilise this stretch: cysteine 90/cysteine 417, cysteine 122/cysteine 127, cysteine 182/cysteine 229, cysteine 231/cysteine 236, cysteine 277/cysteine 290, cysteine 279/cysteine 288, cysteine 316/cysteine 335, and cysteine 421/cysteine 446. Position 116 (arginine 116) interacts with substrate. Asparagine 144 carries N-linked (GlcNAc...) asparagine; by host glycosylation. Catalysis depends on aspartate 149, which acts as the Proton donor/acceptor. A substrate-binding site is contributed by arginine 150. A substrate-binding site is contributed by 275–276; the sequence is EE. Arginine 291 is a binding site for substrate. Aspartate 292, glycine 296, and aspartate 322 together coordinate Ca(2+). A substrate-binding site is contributed by arginine 368. The N-linked (GlcNAc...) asparagine; by host glycan is linked to asparagine 398. Residue tyrosine 402 is the Nucleophile of the active site.

It belongs to the glycosyl hydrolase 34 family. In terms of assembly, homotetramer. The cofactor is Ca(2+). In terms of processing, N-glycosylated.

The protein resides in the virion membrane. It is found in the host apical cell membrane. It catalyses the reaction Hydrolysis of alpha-(2-&gt;3)-, alpha-(2-&gt;6)-, alpha-(2-&gt;8)- glycosidic linkages of terminal sialic acid residues in oligosaccharides, glycoproteins, glycolipids, colominic acid and synthetic substrates.. With respect to regulation, inhibited by the neuraminidase inhibitors zanamivir (Relenza) and oseltamivir (Tamiflu). These drugs interfere with the release of progeny virus from infected cells and are effective against all influenza strains. Resistance to neuraminidase inhibitors is quite rare. Functionally, catalyzes the removal of terminal sialic acid residues from viral and cellular glycoconjugates. Cleaves off the terminal sialic acids on the glycosylated HA during virus budding to facilitate virus release. Additionally helps virus spread through the circulation by further removing sialic acids from the cell surface. These cleavages prevent self-aggregation and ensure the efficient spread of the progeny virus from cell to cell. Otherwise, infection would be limited to one round of replication. Described as a receptor-destroying enzyme because it cleaves a terminal sialic acid from the cellular receptors. May facilitate viral invasion of the upper airways by cleaving the sialic acid moieties on the mucin of the airway epithelial cells. Likely to plays a role in the budding process through its association with lipid rafts during intracellular transport. May additionally display a raft-association independent effect on budding. Plays a role in the determination of host range restriction on replication and virulence. Sialidase activity in late endosome/lysosome traffic seems to enhance virus replication. This Influenza A virus (strain A/Duck/Ukraine/1/1963 H3N8) protein is Neuraminidase.